The chain runs to 126 residues: Aspartate 1-decarboxylase (126 aa).

Residue Ser25 is the Schiff-base intermediate with substrate; via pyruvic acid of the active site. Ser25 is subject to Pyruvic acid (Ser). Thr57 is a substrate binding site. The active-site Proton donor is the Tyr58. 72–74 (GAA) contributes to the substrate binding site.

It belongs to the PanD family. Heterooctamer of four alpha and four beta subunits. Requires pyruvate as cofactor. In terms of processing, is synthesized initially as an inactive proenzyme, which is activated by self-cleavage at a specific serine bond to produce a beta-subunit with a hydroxyl group at its C-terminus and an alpha-subunit with a pyruvoyl group at its N-terminus.

It is found in the cytoplasm. It carries out the reaction L-aspartate + H(+) = beta-alanine + CO2. It functions in the pathway cofactor biosynthesis; (R)-pantothenate biosynthesis; beta-alanine from L-aspartate: step 1/1. Functionally, catalyzes the pyruvoyl-dependent decarboxylation of aspartate to produce beta-alanine. In Campylobacter jejuni subsp. jejuni serotype O:23/36 (strain 81-176), this protein is Aspartate 1-decarboxylase.